A 335-amino-acid polypeptide reads, in one-letter code: Beta-ketoacyl-[acyl-carrier-protein] synthase III (335 aa).

Residues C116 and H256 contribute to the active site. Residues Q257–R261 are ACP-binding. The active site involves N286.

Belongs to the thiolase-like superfamily. FabH family. As to quaternary structure, homodimer.

The protein resides in the cytoplasm. It carries out the reaction malonyl-[ACP] + acetyl-CoA + H(+) = 3-oxobutanoyl-[ACP] + CO2 + CoA. It functions in the pathway lipid metabolism; fatty acid biosynthesis. In terms of biological role, catalyzes the condensation reaction of fatty acid synthesis by the addition to an acyl acceptor of two carbons from malonyl-ACP. Catalyzes the first condensation reaction which initiates fatty acid synthesis and may therefore play a role in governing the total rate of fatty acid production. Possesses both acetoacetyl-ACP synthase and acetyl transacylase activities. Its substrate specificity determines the biosynthesis of branched-chain and/or straight-chain of fatty acids. The polypeptide is Beta-ketoacyl-[acyl-carrier-protein] synthase III (Porphyromonas gingivalis (strain ATCC 33277 / DSM 20709 / CIP 103683 / JCM 12257 / NCTC 11834 / 2561)).